The primary structure comprises 157 residues: Probable succinate transporter subunit YjjB (157 aa).

Helical transmembrane passes span Leu-8–Phe-28, Ala-55–Ile-75, Val-87–Ile-107, and Phe-129–Trp-149.

The protein belongs to the ThrE exporter (TC 2.A.79) family. In terms of assembly, the transporter is composed of YjjB and YjjP.

The protein resides in the cell inner membrane. Involved in succinate export with YjjP. Both proteins are required for export. This chain is Probable succinate transporter subunit YjjB, found in Salmonella agona (strain SL483).